The sequence spans 129 residues: M-zodatoxin-Lt8f (129 aa).

The first 20 residues, 1–20 (MKYFVVALALVAAFACIAES), serve as a signal peptide directing secretion. A propeptide spanning residues 21 to 60 (KPAESEHELAEVEEENELADLEDAVWLEHLADLSDLEEAR) is cleaved from the precursor. Positions 57-60 (EEAR) match the Processing quadruplet motif motif.

Post-translationally, cleavage of the propeptide depends on the processing quadruplet motif (XXXR, with at least one of X being E). As to expression, expressed by the venom gland.

It localises to the secreted. Insecticidal, cytolytic and antimicrobial peptide. Has insecticidal activity against the flesh fly S.carnaria. Has antibacterial activity against the Gram-negative bacteria E.coli. Forms voltage-dependent, ion-permeable channels in membranes. At high concentration causes cell membrane lysis. The chain is M-zodatoxin-Lt8f (cit 1-7) from Lachesana tarabaevi (Spider).